Reading from the N-terminus, the 475-residue chain is Ribulose bisphosphate carboxylase large chain (475 aa).

Positions Met-1 to Ser-2 are excised as a propeptide. Pro-3 carries the post-translational modification N-acetylproline. Lys-14 is modified (N6,N6,N6-trimethyllysine). Residues Asn-123 and Thr-173 each coordinate substrate. Lys-175 acts as the Proton acceptor in catalysis. Lys-177 is a substrate binding site. Lys-201, Asp-203, and Glu-204 together coordinate Mg(2+). Lys-201 carries the N6-carboxylysine modification. His-294 (proton acceptor) is an active-site residue. Positions 295, 327, and 379 each coordinate substrate.

It belongs to the RuBisCO large chain family. Type I subfamily. As to quaternary structure, heterohexadecamer of 8 large chains and 8 small chains; disulfide-linked. The disulfide link is formed within the large subunit homodimers. Requires Mg(2+) as cofactor. Post-translationally, the disulfide bond which can form in the large chain dimeric partners within the hexadecamer appears to be associated with oxidative stress and protein turnover.

It localises to the plastid. The protein localises to the chloroplast. The enzyme catalyses 2 (2R)-3-phosphoglycerate + 2 H(+) = D-ribulose 1,5-bisphosphate + CO2 + H2O. It carries out the reaction D-ribulose 1,5-bisphosphate + O2 = 2-phosphoglycolate + (2R)-3-phosphoglycerate + 2 H(+). RuBisCO catalyzes two reactions: the carboxylation of D-ribulose 1,5-bisphosphate, the primary event in carbon dioxide fixation, as well as the oxidative fragmentation of the pentose substrate in the photorespiration process. Both reactions occur simultaneously and in competition at the same active site. This chain is Ribulose bisphosphate carboxylase large chain, found in Adiantum capillus-veneris (Maidenhair fern).